Reading from the N-terminus, the 170-residue chain is Small ribosomal subunit protein uS5 (170 aa).

Positions 12-75 (WSELLVSVRR…NAAKKSMIRV (64 aa)) constitute an S5 DRBM domain.

It belongs to the universal ribosomal protein uS5 family. Part of the 30S ribosomal subunit. Contacts proteins S4 and S8.

Functionally, with S4 and S12 plays an important role in translational accuracy. Its function is as follows. Located at the back of the 30S subunit body where it stabilizes the conformation of the head with respect to the body. The protein is Small ribosomal subunit protein uS5 of Wolbachia sp. subsp. Brugia malayi (strain TRS).